A 453-amino-acid chain; its full sequence is tRNA modification GTPase MnmE (453 aa).

R22, E79, and K119 together coordinate (6S)-5-formyl-5,6,7,8-tetrahydrofolate. In terms of domain architecture, TrmE-type G spans 215-376; sequence GMKVVIAGRP…LKQHLKSLMG (162 aa). Residue N225 participates in K(+) binding. GTP is bound by residues 225–230, 244–250, 269–272, and 334–337; these read NAGKSS, TEIAGTT, DTAG, and NKAD. S229 lines the Mg(2+) pocket. K(+)-binding residues include T244, I246, and T249. T250 contacts Mg(2+). (6S)-5-formyl-5,6,7,8-tetrahydrofolate is bound at residue K453.

Belongs to the TRAFAC class TrmE-Era-EngA-EngB-Septin-like GTPase superfamily. TrmE GTPase family. Homodimer. Heterotetramer of two MnmE and two MnmG subunits. The cofactor is K(+).

It localises to the cytoplasm. Exhibits a very high intrinsic GTPase hydrolysis rate. Involved in the addition of a carboxymethylaminomethyl (cmnm) group at the wobble position (U34) of certain tRNAs, forming tRNA-cmnm(5)s(2)U34. This Shewanella oneidensis (strain ATCC 700550 / JCM 31522 / CIP 106686 / LMG 19005 / NCIMB 14063 / MR-1) protein is tRNA modification GTPase MnmE.